Here is a 263-residue protein sequence, read N- to C-terminus: Peptide methionine sulfoxide reductase A4, chloroplastic (263 aa).

The transit peptide at 1-75 directs the protein to the chloroplast; the sequence is MPPLLASTSS…GLGGLGGSPR (75 aa).

Belongs to the MsrA Met sulfoxide reductase family. In terms of tissue distribution, expressed in roots, stems, leaves and flowers.

The protein resides in the plastid. It localises to the chloroplast. It catalyses the reaction L-methionyl-[protein] + [thioredoxin]-disulfide + H2O = L-methionyl-(S)-S-oxide-[protein] + [thioredoxin]-dithiol. The enzyme catalyses [thioredoxin]-disulfide + L-methionine + H2O = L-methionine (S)-S-oxide + [thioredoxin]-dithiol. Its function is as follows. Catalyzes the reduction of methionine sulfoxide (MetSO) to methionine in proteins. Involved in abiotic and salt stress responses. Plays a protective role against oxidative stress by restoring activity to proteins that have been inactivated by methionine oxidation. MSRA family specifically reduces the MetSO S-enantiomer. This Oryza sativa subsp. japonica (Rice) protein is Peptide methionine sulfoxide reductase A4, chloroplastic.